The primary structure comprises 47 residues: Defensin Ec-AMP-D1 (47 aa).

Intrachain disulfides connect Cys-3–Cys-47, Cys-14–Cys-34, Cys-20–Cys-41, and Cys-24–Cys-43.

Its function is as follows. Has antifungal activity. Inhibits spore germination in F.graminearum (IC(50)=15 ug/ml), F.oxysporum (IC(50)=102 ug/ml), F.verticillioides (IC(50)=8.5 ug/ml) and D.maydis (IC(50)=12.5 ug/ml), but not in C.graminicola, B.cinerea and H.sativum at concentrations below 30 ug/ml. Inhibits hyphal development in P.infestans (IC(50)=25.5 ug/ml), but not release of zoospores. At concentrations above 100 ug/ml, induces morphological changes such as lysis of hyphae and sporangia in P.infestans. This Echinochloa crus-galli (Barnyard grass) protein is Defensin Ec-AMP-D1.